We begin with the raw amino-acid sequence, 275 residues long: Dermonecrotic toxin LruSicTox-alphaIV1 (275 aa).

The active site involves H5. Mg(2+)-binding residues include E25 and D27. H41 acts as the Nucleophile in catalysis. Disulfide bonds link C45/C51 and C47/C192. Residue D85 coordinates Mg(2+).

This sequence belongs to the arthropod phospholipase D family. Class II subfamily. It depends on Mg(2+) as a cofactor. In terms of tissue distribution, expressed by the venom gland.

The protein resides in the secreted. The catalysed reaction is an N-(acyl)-sphingosylphosphocholine = an N-(acyl)-sphingosyl-1,3-cyclic phosphate + choline. It catalyses the reaction an N-(acyl)-sphingosylphosphoethanolamine = an N-(acyl)-sphingosyl-1,3-cyclic phosphate + ethanolamine. It carries out the reaction a 1-acyl-sn-glycero-3-phosphocholine = a 1-acyl-sn-glycero-2,3-cyclic phosphate + choline. The enzyme catalyses a 1-acyl-sn-glycero-3-phosphoethanolamine = a 1-acyl-sn-glycero-2,3-cyclic phosphate + ethanolamine. Its function is as follows. Dermonecrotic toxins cleave the phosphodiester linkage between the phosphate and headgroup of certain phospholipids (sphingolipid and lysolipid substrates), forming an alcohol (often choline) and a cyclic phosphate. This toxin acts on sphingomyelin (SM). It may also act on ceramide phosphoethanolamine (CPE), lysophosphatidylcholine (LPC) and lysophosphatidylethanolamine (LPE), but not on lysophosphatidylserine (LPS), and lysophosphatidylglycerol (LPG). It acts by transphosphatidylation, releasing exclusively cyclic phosphate products as second products. Induces dermonecrosis, hemolysis, increased vascular permeability, edema, inflammatory response, and platelet aggregation. This chain is Dermonecrotic toxin LruSicTox-alphaIV1, found in Loxosceles rufescens (Mediterranean recluse spider).